The following is a 329-amino-acid chain: (12E)-labda-8(17),12,14-triene synthase (329 aa).

Positions 90 and 95 each coordinate Mg(2+). The DDXXXE motif motif lies at 90 to 95; sequence DDMHGE. Arg184 is a substrate binding site. Mg(2+) contacts are provided by Asn230 and Ser234. The NXXXSXXXE motif signature appears at 230-238; sequence NDLASYERE. Arg237 lines the substrate pocket. Position 238 (Glu238) interacts with Mg(2+). 316 to 317 contacts substrate; sequence RY.

The protein belongs to the terpene synthase family. The cofactor is Mg(2+).

The catalysed reaction is (+)-copalyl diphosphate = (12E)-labda-8(17),12,14-triene + diphosphate. Its function is as follows. Involved in the biosynthesis of the mercapturic acid derivative diterpene cyslabdan A, a potentiator of the beta-lactam antibiotic imipenem. Catalyzes the conversion of (+)-copalyl diphosphate to yield labda-8(17),12(E),14-triene (biformene). The sequence is that of (12E)-labda-8(17),12,14-triene synthase from Streptomyces cyslabdanicus.